A 381-amino-acid polypeptide reads, in one-letter code: Peptidoglycan transport system permease protein YejE (381 aa).

5 helical membrane-spanning segments follow: residues Y38–A58, V183–I203, I230–L250, L292–I312, and W347–G367. Positions F179–R371 constitute an ABC transmembrane type-1 domain.

Belongs to the binding-protein-dependent transport system permease family. As to quaternary structure, the complex is composed of one ATP-binding protein (YejF), two transmembrane proteins (YejB and YejE) and a solute-binding protein (YepA or YejA).

Its subcellular location is the cell inner membrane. Functionally, part of the ABC transporter complex YejBEF-YepA involved in the uptake of muropeptides, the breakdown products of cell wall peptidoglycan. The import of muropeptides into the cell enables peptidoglycan recycling, which is vital for cell wall integrity in this bacterium. Is also probably part of the ABC transporter complex YejABEF, which is likely involved in broad-spectrum peptide import. Responsible for the translocation of the substrate across the membrane. This chain is Peptidoglycan transport system permease protein YejE, found in Agrobacterium fabrum (strain C58 / ATCC 33970) (Agrobacterium tumefaciens (strain C58)).